We begin with the raw amino-acid sequence, 41 residues long: Large ribosomal subunit protein bL36 (41 aa).

Belongs to the bacterial ribosomal protein bL36 family.

The sequence is that of Large ribosomal subunit protein bL36 from Methylorubrum extorquens (strain CM4 / NCIMB 13688) (Methylobacterium extorquens).